A 439-amino-acid chain; its full sequence is Nuclear hormone receptor family member nhr-97 (439 aa).

Over residues 1 to 13 (MSGDAQPSSNQRA) the composition is skewed to polar residues. Residues 1–22 (MSGDAQPSSNQRATEARPPPSP) are disordered. Positions 32 to 108 (GALCVVCGDR…VGMKIEAVKM (77 aa)) form a DNA-binding region, nuclear receptor. 2 NR C4-type zinc fingers span residues 35 to 56 (CVVC…CHGC) and 72 to 96 (CRYG…FHRC). Positions 112-135 (LTKRKKEKTDEDDTDDGGSHESFE) are disordered. The NR LBD domain maps to 173-408 (FVQPSLQNLL…GEGLLFWQLY (236 aa)).

The protein belongs to the nuclear hormone receptor family.

Its subcellular location is the nucleus. In terms of biological role, orphan nuclear receptor. The polypeptide is Nuclear hormone receptor family member nhr-97 (nhr-97) (Caenorhabditis elegans).